The chain runs to 619 residues: 1-deoxy-D-xylulose-5-phosphate synthase (619 aa).

Residues His76 and 117–119 (AHS) contribute to the thiamine diphosphate site. Asp148 contributes to the Mg(2+) binding site. Thiamine diphosphate contacts are provided by residues 149–150 (GA), Asn177, Tyr284, and Glu366. Mg(2+) is bound at residue Asn177.

The protein belongs to the transketolase family. DXPS subfamily. In terms of assembly, homodimer. Requires Mg(2+) as cofactor. The cofactor is thiamine diphosphate.

The catalysed reaction is D-glyceraldehyde 3-phosphate + pyruvate + H(+) = 1-deoxy-D-xylulose 5-phosphate + CO2. Its pathway is metabolic intermediate biosynthesis; 1-deoxy-D-xylulose 5-phosphate biosynthesis; 1-deoxy-D-xylulose 5-phosphate from D-glyceraldehyde 3-phosphate and pyruvate: step 1/1. Catalyzes the acyloin condensation reaction between C atoms 2 and 3 of pyruvate and glyceraldehyde 3-phosphate to yield 1-deoxy-D-xylulose-5-phosphate (DXP). This chain is 1-deoxy-D-xylulose-5-phosphate synthase, found in Azoarcus sp. (strain BH72).